The sequence spans 357 residues: 4-hydroxy-3-methylbut-2-en-1-yl diphosphate synthase (flavodoxin) (357 aa).

[4Fe-4S] cluster is bound by residues Cys265, Cys268, Cys300, and Glu307.

This sequence belongs to the IspG family. Homodimer. Requires [4Fe-4S] cluster as cofactor.

It catalyses the reaction (2E)-4-hydroxy-3-methylbut-2-enyl diphosphate + oxidized [flavodoxin] + H2O + 2 H(+) = 2-C-methyl-D-erythritol 2,4-cyclic diphosphate + reduced [flavodoxin]. It functions in the pathway isoprenoid biosynthesis; isopentenyl diphosphate biosynthesis via DXP pathway; isopentenyl diphosphate from 1-deoxy-D-xylulose 5-phosphate: step 5/6. In terms of biological role, converts 2C-methyl-D-erythritol 2,4-cyclodiphosphate (ME-2,4cPP) into 1-hydroxy-2-methyl-2-(E)-butenyl 4-diphosphate. The sequence is that of 4-hydroxy-3-methylbut-2-en-1-yl diphosphate synthase (flavodoxin) from Aquifex aeolicus (strain VF5).